Here is a 277-residue protein sequence, read N- to C-terminus: Putative phosphoenolpyruvate synthase regulatory protein (277 aa).

Position 157–164 (157–164 (GVSRSGKT)) interacts with ADP.

The protein belongs to the pyruvate, phosphate/water dikinase regulatory protein family. PSRP subfamily.

The enzyme catalyses [pyruvate, water dikinase] + ADP = [pyruvate, water dikinase]-phosphate + AMP + H(+). The catalysed reaction is [pyruvate, water dikinase]-phosphate + phosphate + H(+) = [pyruvate, water dikinase] + diphosphate. Functionally, bifunctional serine/threonine kinase and phosphorylase involved in the regulation of the phosphoenolpyruvate synthase (PEPS) by catalyzing its phosphorylation/dephosphorylation. This is Putative phosphoenolpyruvate synthase regulatory protein from Vibrio vulnificus (strain CMCP6).